The sequence spans 179 residues: Large ribosomal subunit protein uL5 (179 aa).

It belongs to the universal ribosomal protein uL5 family. In terms of assembly, part of the 50S ribosomal subunit; part of the 5S rRNA/L5/L18/L25 subcomplex. Contacts the 5S rRNA and the P site tRNA. Forms a bridge to the 30S subunit in the 70S ribosome.

In terms of biological role, this is one of the proteins that bind and probably mediate the attachment of the 5S RNA into the large ribosomal subunit, where it forms part of the central protuberance. In the 70S ribosome it contacts protein S13 of the 30S subunit (bridge B1b), connecting the 2 subunits; this bridge is implicated in subunit movement. Contacts the P site tRNA; the 5S rRNA and some of its associated proteins might help stabilize positioning of ribosome-bound tRNAs. The protein is Large ribosomal subunit protein uL5 of Clostridium beijerinckii (strain ATCC 51743 / NCIMB 8052) (Clostridium acetobutylicum).